The sequence spans 395 residues: Chalcone synthase 1 (395 aa).

Val-2 carries the post-translational modification N-acetylvaline. Residue Cys-169 is part of the active site.

This sequence belongs to the thiolase-like superfamily. Chalcone/stilbene synthases family.

The catalysed reaction is (E)-4-coumaroyl-CoA + 3 malonyl-CoA + 3 H(+) = 2',4,4',6'-tetrahydroxychalcone + 3 CO2 + 4 CoA. It participates in secondary metabolite biosynthesis; flavonoid biosynthesis. In terms of biological role, the primary product of this enzyme is 4,2',4',6'-tetrahydroxychalcone (also termed naringenin-chalcone or chalcone) which can under specific conditions spontaneously isomerize into naringenin. This chain is Chalcone synthase 1 (CHS1), found in Sinapis alba (White mustard).